Reading from the N-terminus, the 408-residue chain is Lysosomal phospholipase A and acyltransferase (408 aa).

The first 31 residues, 1–31 (MGLRRGPCPAALLPGGFLFLLLLADPALLAG), serve as a signal peptide directing secretion. Residue aspartate 42 coordinates substrate. Cysteine 61 and cysteine 85 form a disulfide bridge. Asparagine 95 carries N-linked (GlcNAc...) asparagine glycosylation. The active-site Acyl-ester intermediate is the serine 194. Serine 194 serves as a coordination point for Zn(2+). Methionine 195 contributes to the substrate binding site. N-linked (GlcNAc...) asparagine glycans are attached at residues asparagine 269 and asparagine 285. Residues aspartate 336 and cysteine 351 each coordinate Zn(2+). Active-site charge relay system residues include aspartate 356 and histidine 388. Histidine 388 lines the Zn(2+) pocket. A glycan (N-linked (GlcNAc...) asparagine) is linked at asparagine 394.

The protein belongs to the AB hydrolase superfamily. Lipase family. In terms of processing, N-glycosylated. N-glycosylation is important for maturation of the enzyme and normal subcellular location.

The protein localises to the secreted. The protein resides in the lysosome. Its subcellular location is the membrane. It carries out the reaction a 1,2-diacyl-sn-glycero-3-phosphocholine + H2O = a 2-acyl-sn-glycero-3-phosphocholine + a fatty acid + H(+). It catalyses the reaction 1-hexadecanoyl-2-(9Z-octadecenoyl)-sn-glycero-3-phosphocholine + H2O = 2-(9Z-octadecenoyl)-sn-glycero-3-phosphocholine + hexadecanoate + H(+). The enzyme catalyses 1,2-di-(9Z-octadecenoyl)-sn-glycero-3-phosphocholine + H2O = 2-(9Z-octadecenoyl)-sn-glycero-3-phosphocholine + (9Z)-octadecenoate + H(+). The catalysed reaction is 1-hexadecanoyl-2-glutaroyl-sn-glycero-3-phosphocholine + H2O = 2-glutaroyl-sn-glycero-3-phosphocholine + hexadecanoate + H(+). It carries out the reaction 1-hexadecanoyl-2-nonadioyl-sn-glycero-3-phosphocholine + H2O = 2-nonadioyl-sn-glycero-3-phosphocholine + hexadecanoate + H(+). It catalyses the reaction 1-hexadecanoyl-2-(5-oxopentanoyl)-sn-glycero-3-phosphocholine + H2O = 2-(5-oxopentanoyl)-sn-glycero-3-phosphocholine + hexadecanoate + H(+). The enzyme catalyses 1-hexadecanoyl-2-(9-oxononanoyl)-sn-glycero-3-phosphocholine + H2O = 2-(9-oxononanoyl)-sn-glycero-3-phosphocholine + hexadecanoate + H(+). The catalysed reaction is 1,2-dihexadecanoyl-sn-glycero-3-phosphocholine + H2O = 2-hexadecanoyl-sn-glycero-3-phosphocholine + hexadecanoate + H(+). It carries out the reaction a 1,2-diacyl-sn-glycero-3-phosphocholine + H2O = a 1-acyl-sn-glycero-3-phosphocholine + a fatty acid + H(+). It catalyses the reaction 1-hexadecanoyl-2-(9Z-octadecenoyl)-sn-glycero-3-phosphocholine + H2O = 1-hexadecanoyl-sn-glycero-3-phosphocholine + (9Z)-octadecenoate + H(+). The enzyme catalyses 1,2-di-(9Z-octadecenoyl)-sn-glycero-3-phosphocholine + H2O = 1-(9Z-octadecenoyl)-sn-glycero-3-phosphocholine + (9Z)-octadecenoate + H(+). The catalysed reaction is 1,2-dihexadecanoyl-sn-glycero-3-phosphocholine + H2O = 1-hexadecanoyl-sn-glycero-3-phosphocholine + hexadecanoate + H(+). It carries out the reaction a 1-acyl-sn-glycero-3-phosphocholine + H2O = sn-glycerol 3-phosphocholine + a fatty acid + H(+). It catalyses the reaction 1-hexadecanoyl-sn-glycero-3-phosphocholine + H2O = sn-glycerol 3-phosphocholine + hexadecanoate + H(+). The enzyme catalyses N-(acetyl)-sphing-4-enine + a 1,2-diacyl-sn-glycero-3-phosphoethanolamine = 1-O-acyl-N-(acetyl)-sphing-4-enine + a 2-acyl-sn-glycero-3-phosphoethanolamine. The catalysed reaction is 1-hexadecanoyl-2-(9Z-octadecenoyl)-sn-glycero-3-phosphoethanolamine + N-(acetyl)-sphing-4-enine = 2-(9Z-octadecenoyl)-sn-glycero-3-phosphoethanolamine + 1-hexadecanoyl-N-(acetyl)-sphing-4-enine. It carries out the reaction 1-hexadecanoyl-2-(9Z,12Z-octadecadienoyl)-sn-glycero-3-phosphoethanolamine + N-(acetyl)-sphing-4-enine = 2-(9Z,12Z)-octadecadienoyl-sn-glycero-3-phosphoethanolamine + 1-hexadecanoyl-N-(acetyl)-sphing-4-enine. It catalyses the reaction 1-hexadecanoyl-2-(5Z,8Z,11Z,14Z-eicosatetraenoyl)-sn-glycero-3-phosphoethanolamine + N-(acetyl)-sphing-4-enine = 2-(5Z,8Z,11Z,14Z)-eicosatetraenoyl-sn-glycero-3-phosphoethanolamine + 1-hexadecanoyl-N-(acetyl)-sphing-4-enine. The enzyme catalyses N-(acetyl)-sphing-4-enine + a 1,2-diacyl-sn-glycero-3-phosphoethanolamine = 1-O-acyl-N-(acetyl)-sphing-4-enine + a 1-acyl-sn-glycero-3-phosphoethanolamine. The catalysed reaction is 1-hexadecanoyl-2-(9Z-octadecenoyl)-sn-glycero-3-phosphoethanolamine + N-(acetyl)-sphing-4-enine = 1-(9Z-octadecenoyl)-N-(acetyl)-sphing-4-enine + 1-hexadecanoyl-sn-glycero-3-phosphoethanolamine. It carries out the reaction 1-hexadecanoyl-2-(9Z,12Z-octadecadienoyl)-sn-glycero-3-phosphoethanolamine + N-(acetyl)-sphing-4-enine = 1-(9Z,12Z-octadecadienoyl)-N-acetylsphing-4-enine + 1-hexadecanoyl-sn-glycero-3-phosphoethanolamine. It catalyses the reaction 1-hexadecanoyl-2-(5Z,8Z,11Z,14Z-eicosatetraenoyl)-sn-glycero-3-phosphoethanolamine + N-(acetyl)-sphing-4-enine = 1-(5Z,8Z,11Z,14Z)-eicosatetraenoyl-N-(acetyl)-sphing-4-enine + 1-hexadecanoyl-sn-glycero-3-phosphoethanolamine. The enzyme catalyses N-(acetyl)-sphing-4-enine + a 1,2-diacyl-sn-glycero-3-phosphocholine = 1-O-acyl-N-(acetyl)-sphing-4-enine + a 2-acyl-sn-glycero-3-phosphocholine. The catalysed reaction is 1-hexadecanoyl-2-(9Z-octadecenoyl)-sn-glycero-3-phosphocholine + N-(acetyl)-sphing-4-enine = 1-hexadecanoyl-N-(acetyl)-sphing-4-enine + 2-(9Z-octadecenoyl)-sn-glycero-3-phosphocholine. It carries out the reaction 1-hexadecanoyl-2-(9Z,12Z-octadecadienoyl)-sn-glycero-3-phosphocholine + N-(acetyl)-sphing-4-enine = 2-(9Z,12Z-octadecadienoyl)-sn-glycero-3-phosphocholine + 1-hexadecanoyl-N-(acetyl)-sphing-4-enine. It catalyses the reaction 1-hexadecanoyl-2-(5Z,8Z,11Z,14Z-eicosatetraenoyl)-sn-glycero-3-phosphocholine + N-(acetyl)-sphing-4-enine = 1-hexadecanoyl-N-(acetyl)-sphing-4-enine + 2-(5Z,8Z,11Z,14Z)-eicosatetraenoyl-sn-glycero-3-phosphocholine. The enzyme catalyses 1-hexadecanoyl-2-(4Z,7Z,10Z,13Z,16Z,19Z-docosahexaenoyl)-sn-glycero-3-phosphocholine + N-(acetyl)-sphing-4-enine = 2-(4Z,7Z,10Z,13Z,16Z,19Z-docosahexaenoyl)-sn-glycero-3-phosphocholine + 1-hexadecanoyl-N-(acetyl)-sphing-4-enine. The catalysed reaction is 1-hexadecanoyl-2-nonadioyl-sn-glycero-3-phosphocholine + N-(acetyl)-sphing-4-enine = 2-nonadioyl-sn-glycero-3-phosphocholine + 1-hexadecanoyl-N-(acetyl)-sphing-4-enine. It carries out the reaction 1-octadecanoyl-2-(9Z-octadecenoyl)-sn-glycero-3-phosphocholine + N-(acetyl)-sphing-4-enine = 1-octadecanoyl-N-(acetyl)-sphing-4-enine + 2-(9Z-octadecenoyl)-sn-glycero-3-phosphocholine. It catalyses the reaction 1-(9Z)-octadecenoyl-2-octadecanoyl-sn-glycero-3-phosphocholine + N-(acetyl)-sphing-4-enine = 2-octadecanoyl-sn-glycero-3-phosphocholine + 1-(9Z-octadecenoyl)-N-(acetyl)-sphing-4-enine. The enzyme catalyses 1-octadecanoyl-2-(5Z,8Z,11Z,14Z-eicosatetraenoyl)-sn-glycero-3-phosphocholine + N-(acetyl)-sphing-4-enine = 1-octadecanoyl-N-(acetyl)-sphing-4-enine + 2-(5Z,8Z,11Z,14Z)-eicosatetraenoyl-sn-glycero-3-phosphocholine. The catalysed reaction is 1-(9Z-octadecenoyl)-2-hexadecanoyl-sn-glycero-3-phosphocholine + N-(acetyl)-sphing-4-enine = 1-(9Z-octadecenoyl)-N-(acetyl)-sphing-4-enine + 2-hexadecanoyl-sn-glycero-3-phosphocholine. It carries out the reaction N-(acetyl)-sphing-4-enine + a 1,2-diacyl-sn-glycero-3-phosphocholine = 1-O-acyl-N-(acetyl)-sphing-4-enine + a 1-acyl-sn-glycero-3-phosphocholine. It catalyses the reaction 1-hexadecanoyl-2-(9Z-octadecenoyl)-sn-glycero-3-phosphocholine + N-(acetyl)-sphing-4-enine = 1-(9Z-octadecenoyl)-N-(acetyl)-sphing-4-enine + 1-hexadecanoyl-sn-glycero-3-phosphocholine. The enzyme catalyses 1-hexadecanoyl-2-(9Z,12Z-octadecadienoyl)-sn-glycero-3-phosphocholine + N-(acetyl)-sphing-4-enine = 1-(9Z,12Z-octadecadienoyl)-N-acetylsphing-4-enine + 1-hexadecanoyl-sn-glycero-3-phosphocholine. The catalysed reaction is 1-hexadecanoyl-2-(5Z,8Z,11Z,14Z-eicosatetraenoyl)-sn-glycero-3-phosphocholine + N-(acetyl)-sphing-4-enine = 1-(5Z,8Z,11Z,14Z)-eicosatetraenoyl-N-(acetyl)-sphing-4-enine + 1-hexadecanoyl-sn-glycero-3-phosphocholine. It carries out the reaction 1-hexadecanoyl-2-(4Z,7Z,10Z,13Z,16Z,19Z-docosahexaenoyl)-sn-glycero-3-phosphocholine + N-(acetyl)-sphing-4-enine = 1-(4Z,7Z,10Z,13Z,16Z,19Z-docosahexaenoyl)-N-(acetyl)-sphing-4-enine + 1-hexadecanoyl-sn-glycero-3-phosphocholine. It catalyses the reaction 1-octadecanoyl-2-(9Z-octadecenoyl)-sn-glycero-3-phosphocholine + N-(acetyl)-sphing-4-enine = 1-(9Z-octadecenoyl)-N-(acetyl)-sphing-4-enine + 1-octadecanoyl-sn-glycero-3-phosphocholine. The enzyme catalyses 1-octadecanoyl-2-(9Z,12Z)-octadecadienoyl-sn-glycero-3-phosphocholine + N-(acetyl)-sphing-4-enine = 1-(9Z,12Z-octadecadienoyl)-N-acetylsphing-4-enine + 1-octadecanoyl-sn-glycero-3-phosphocholine. The catalysed reaction is 1-(9Z-octadecenoyl)-2-hexadecanoyl-sn-glycero-3-phosphocholine + N-(acetyl)-sphing-4-enine = 1-hexadecanoyl-N-(acetyl)-sphing-4-enine + 1-(9Z-octadecenoyl)-sn-glycero-3-phosphocholine. It carries out the reaction 1-(9Z)-octadecenoyl-2-octadecanoyl-sn-glycero-3-phosphocholine + N-(acetyl)-sphing-4-enine = 1-octadecanoyl-N-(acetyl)-sphing-4-enine + 1-(9Z-octadecenoyl)-sn-glycero-3-phosphocholine. It catalyses the reaction 1,2-di-(9Z-octadecenoyl)-sn-glycero-3-phosphocholine + N-(acetyl)-sphing-4-enine = 1-(9Z-octadecenoyl)-N-(acetyl)-sphing-4-enine + 1-(9Z-octadecenoyl)-sn-glycero-3-phosphocholine. The enzyme catalyses 1-octadecanoyl-2-(5Z,8Z,11Z,14Z-eicosatetraenoyl)-sn-glycero-3-phosphocholine + N-(acetyl)-sphing-4-enine = 1-(5Z,8Z,11Z,14Z)-eicosatetraenoyl-N-(acetyl)-sphing-4-enine + 1-octadecanoyl-sn-glycero-3-phosphocholine. The catalysed reaction is a 1,2-diacyl-sn-glycero-3-phospho-L-serine + N-(acetyl)-sphing-4-enine = a 2-acyl-sn-glycero-3-phospho-L-serine + 1-O-acyl-N-(acetyl)-sphing-4-enine. It carries out the reaction 1-octadecanoyl-2-(9Z-octadecenoyl)-sn-glycero-3-phospho-L-serine + N-(acetyl)-sphing-4-enine = 2-(9Z-octadecenoyl)-sn-glycero-3-phospho-L-serine + 1-octadecanoyl-N-(acetyl)-sphing-4-enine. It catalyses the reaction a 1,2-diacyl-sn-glycero-3-phospho-L-serine + N-(acetyl)-sphing-4-enine = 1-O-acyl-N-(acetyl)-sphing-4-enine + a 1-acyl-sn-glycero-3-phospho-L-serine. The enzyme catalyses 1-octadecanoyl-2-(9Z-octadecenoyl)-sn-glycero-3-phospho-L-serine + N-(acetyl)-sphing-4-enine = 1-octadecanoyl-sn-glycero-3-phosphoserine + 1-(9Z-octadecenoyl)-N-(acetyl)-sphing-4-enine. The catalysed reaction is a 1,2-diacyl-sn-glycero-3-phospho-(1'-sn-glycerol) + N-(acetyl)-sphing-4-enine = 2-acyl-sn-glycero-3-phospho-(1'-sn-glycerol) + 1-O-acyl-N-(acetyl)-sphing-4-enine. It carries out the reaction 1-octadecanoyl-2-(9Z-octadecenoyl)-sn-glycero-3-phospho-(1'-sn-glycerol) + N-(acetyl)-sphing-4-enine = 2-(9Z-octadecenoyl)-sn-glycero-3-phospho-(1'-sn-glycerol) + 1-octadecanoyl-N-(acetyl)-sphing-4-enine. It catalyses the reaction a 1,2-diacyl-sn-glycero-3-phospho-(1'-sn-glycerol) + N-(acetyl)-sphing-4-enine = 1-O-acyl-N-(acetyl)-sphing-4-enine + 1-acyl-sn-glycero-3-phospho-(1'-sn-glycerol). The enzyme catalyses 1-octadecanoyl-2-(9Z-octadecenoyl)-sn-glycero-3-phospho-(1'-sn-glycerol) + N-(acetyl)-sphing-4-enine = 1-octadecanoyl-sn-glycero-3-phospho-(1'-sn-glycerol) + 1-(9Z-octadecenoyl)-N-(acetyl)-sphing-4-enine. The catalysed reaction is an N-acylethanolamine + a 1,2-diacyl-sn-glycero-3-phosphocholine = 2-(acylamino)ethyl fatty acid + a 2-acyl-sn-glycero-3-phosphocholine. It carries out the reaction an N-acylethanolamine + a 1,2-diacyl-sn-glycero-3-phosphocholine = 2-(acylamino)ethyl fatty acid + a 1-acyl-sn-glycero-3-phosphocholine. It catalyses the reaction N-(5Z,8Z,11Z,14Z-eicosatetraenoyl)-ethanolamine + 1,2-di-(9Z-octadecenoyl)-sn-glycero-3-phosphocholine = 2-[(5Z,8Z,11Z,14Z)-eicosatetraenoylamino]ethyl (9Z)-octadecenoate + (9Z-octadecenoyl)-sn-glycero-3-phosphocholine. The enzyme catalyses N-(9Z-octadecenoyl) ethanolamine + 1,2-di-(9Z-octadecenoyl)-sn-glycero-3-phosphocholine = 2-[(9Z)-octadecenoylamino]ethyl (9Z)-octadecenoate + (9Z-octadecenoyl)-sn-glycero-3-phosphocholine. The catalysed reaction is a 3-acyl-sn-glycerol + a 1,2-diacyl-sn-glycero-3-phosphocholine = a 1,3-diacylglycerol + a 1-acyl-sn-glycero-3-phosphocholine. It carries out the reaction a 3-acyl-sn-glycerol + a 1,2-diacyl-sn-glycero-3-phosphocholine = a 1,3-diacylglycerol + a 2-acyl-sn-glycero-3-phosphocholine. It catalyses the reaction 3-(9Z-octadecenoyl)-sn-glycerol + 1,2-di-(9Z-octadecenoyl)-sn-glycero-3-phosphocholine = 1,3-di-(9Z-octadecenoyl)-glycerol + (9Z-octadecenoyl)-sn-glycero-3-phosphocholine. The enzyme catalyses 3-hexadecanoyl-sn-glycerol + 1,2-di-(9Z-octadecenoyl)-sn-glycero-3-phosphocholine = 1-(9Z)-octadecenoyl-3-hexadecanoyl-sn-glycerol + (9Z-octadecenoyl)-sn-glycero-3-phosphocholine. The catalysed reaction is a 1-acyl-sn-glycerol + a 1,2-diacyl-sn-glycero-3-phosphocholine = a 1,3-diacylglycerol + a 2-acyl-sn-glycero-3-phosphocholine. It carries out the reaction a 1-acyl-sn-glycerol + a 1,2-diacyl-sn-glycero-3-phosphocholine = a 1,3-diacylglycerol + a 1-acyl-sn-glycero-3-phosphocholine. It catalyses the reaction 1-(9Z-octadecenoyl)-sn-glycerol + 1,2-di-(9Z-octadecenoyl)-sn-glycero-3-phosphocholine = 1,3-di-(9Z-octadecenoyl)-glycerol + (9Z-octadecenoyl)-sn-glycero-3-phosphocholine. The enzyme catalyses 1-hexadecanoyl-sn-glycerol + 1,2-di-(9Z-octadecenoyl)-sn-glycero-3-phosphocholine = 1-hexadecanoyl-3-(9Z)-octadecenoyl-sn-glycerol + (9Z-octadecenoyl)-sn-glycero-3-phosphocholine. The catalysed reaction is a 2-acylglycerol + a 1,2-diacyl-sn-glycero-3-phosphocholine = a 1,2-diacylglycerol + a 2-acyl-sn-glycero-3-phosphocholine. It carries out the reaction a 2-acylglycerol + a 1,2-diacyl-sn-glycero-3-phosphocholine = a 1,2-diacylglycerol + a 1-acyl-sn-glycero-3-phosphocholine. It catalyses the reaction 2-hexadecanoylglycerol + 1,2-di-(9Z-octadecenoyl)-sn-glycero-3-phosphocholine = 1-(9Z)-octadecenoyl-2-hexadecanoylglycerol + (9Z-octadecenoyl)-sn-glycero-3-phosphocholine. The enzyme catalyses 1-O-alkylglycerol + a 1,2-diacyl-sn-glycero-3-phosphocholine = 1-O-alkyl-3-acylglycerol + a 1-acyl-sn-glycero-3-phosphocholine. The catalysed reaction is 1-O-alkylglycerol + a 1,2-diacyl-sn-glycero-3-phosphocholine = 1-O-alkyl-3-acylglycerol + a 2-acyl-sn-glycero-3-phosphocholine. It carries out the reaction 1-O-hexadecylglycerol + 1,2-di-(9Z-octadecenoyl)-sn-glycero-3-phosphocholine = 1-O-hexadecyl-3-(9Z)-octadecenoylglycerol + (9Z-octadecenoyl)-sn-glycero-3-phosphocholine. It catalyses the reaction 1-O-alkyl-2-acyl-sn-glycerol + a 1,2-diacyl-sn-glycero-3-phosphocholine = 1-O-alkyl-2,3-diacyl-sn-glycerol + a 2-acyl-sn-glycero-3-phosphocholine. The enzyme catalyses 1-O-alkyl-2-acyl-sn-glycerol + a 1,2-diacyl-sn-glycero-3-phosphocholine = 1-O-alkyl-2,3-diacyl-sn-glycerol + a 1-acyl-sn-glycero-3-phosphocholine. The catalysed reaction is 1-O-hexadecyl-2-acetyl-sn-glycerol + 1,2-di-(9Z-octadecenoyl)-sn-glycero-3-phosphocholine = 1-O-hexadecyl-2-acetyl-3-(9Z)-octadecenoyl-sn-glycerol + (9Z-octadecenoyl)-sn-glycero-3-phosphocholine. It carries out the reaction 1-O-hexadecyl-2-O-methyl-sn-glycerol + 1,2-di-(9Z-octadecenoyl)-sn-glycero-3-phosphocholine = 1-O-hexadecyl-2-O-methyl-3-(9Z)-octadecenoyl-sn-glycerol + (9Z-octadecenoyl)-sn-glycero-3-phosphocholine. It catalyses the reaction a 1,2-diacyl-sn-glycero-3-phosphoethanolamine + H2O = a 1-acyl-sn-glycero-3-phosphoethanolamine + a fatty acid + H(+). The enzyme catalyses 1-acyl-2-(5Z,8Z,11Z,14Z)-eicosatetraenoyl-sn-glycero-3-phosphoethanolamine + H2O = a 1-acyl-sn-glycero-3-phosphoethanolamine + (5Z,8Z,11Z,14Z)-eicosatetraenoate + H(+). The catalysed reaction is a 1,2-diacyl-sn-glycero-3-phospho-(1'-sn-glycerol) + H2O = 1-acyl-sn-glycero-3-phospho-(1'-sn-glycerol) + a fatty acid + H(+). It carries out the reaction 1-hexadecanoyl-2-(9Z-octadecenoyl)-sn-glycero-3-phospho-(1'-sn-glycerol) + H2O = 1-hexadecanoyl-sn-glycero-3-phospho-(1'-sn-glycerol) + (9Z)-octadecenoate + H(+). It catalyses the reaction a 1,2-diacyl-sn-glycero-3-phospho-(1'-sn-glycerol) + H2O = 2-acyl-sn-glycero-3-phospho-(1'-sn-glycerol) + a fatty acid + H(+). The enzyme catalyses 1-hexadecanoyl-2-(9Z-octadecenoyl)-sn-glycero-3-phospho-(1'-sn-glycerol) + H2O = 2-(9Z-octadecenoyl)-sn-glycero-3-phospho-(1'-sn-glycerol) + hexadecanoate + H(+). Its function is as follows. Has dual calcium-independent phospholipase and O-acyltransferase activities with a potential role in glycerophospholipid homeostasis and remodeling of acyl groups of lipophilic alcohols present in acidic cellular compartments. Catalyzes hydrolysis of the ester bond of the fatty acyl group attached at sn-1 or sn-2 position of phospholipids (phospholipase A1 or A2 activity) and transfer it to the hydroxyl group at the first carbon of lipophilic alcohols (O-acyltransferase activity). Among preferred fatty acyl donors are phosphatidylcholines, phosphatidylethanolamines, phosphatidylglycerols and phosphatidylserines. Favors sn-2 over sn-1 deacylation of unsaturated fatty acyl groups of phosphatidylcholines, phosphatidylethanolamines, and phosphatidylglycerols. Among preferred fatty acyl acceptors are natural lipophilic alcohols including short-chain ceramide N-acetyl-sphingosine (C2 ceramide), alkylacylglycerols, monoacylglycerols, and acylethanolamides such as anandamide and oleoylethanolamide. Selectively hydrolyzes the sn-1 fatty acyl group of truncated oxidized phospholipids and may play a role in detoxification of reactive oxidized phospholipids during oxidative stress. Required for normal phospholipid degradation in alveolar macrophages with potential implications in the clearance of pulmonary surfactant, which is mainly composed of dipalmitoylphosphatidylcholine (1,2-dihexadecanoyl-sn-glycero-3-phosphocholine). Involved in the first step of bis(monoacylglycero)phosphate (BMP) de novo synthesis from phosphatidylglycerol (1,2-diacyl-sn-glycero-3-phospho-(1'-sn-glycerol), PG). BMP is an important player in cargo sorting and degradation, regulation of cellular cholesterol levels and intercellular communication. At neutral pH, hydrolyzes the sn-1 fatty acyl group of the lysophosphatidylcholines. The chain is Lysosomal phospholipase A and acyltransferase (PLA2G15) from Canis lupus familiaris (Dog).